A 242-amino-acid polypeptide reads, in one-letter code: C-reactive protein 1.1 (242 aa).

The N-terminal stretch at 1-24 (MKTFHGPTCGTAVSLCLLLFLTSA) is a signal peptide. The Pentraxin (PTX) domain occupies 30-241 (ITSKVKFPPS…GVVLSPNEIC (212 aa)). T60 and Y63 together coordinate phosphocholine. 2 disulfides stabilise this stretch: C62–C125 and C112–C144. Ca(2+)-binding residues include D85 and N86. N147 carries N-linked (GlcNAc...) asparagine glycosylation. Ca(2+)-binding residues include Q169, D170, and Q180. A disulfide bridge connects residues C207 and C241.

It belongs to the pentraxin family. In terms of assembly, homopentamer. Pentraxin (or pentaxin) have a discoid arrangement of 5 non-covalently bound subunits. Ca(2+) is required as a cofactor.

The protein localises to the secreted. Might serve the role of immunoglobulins. In Limulus polyphemus (Atlantic horseshoe crab), this protein is C-reactive protein 1.1.